Here is a 353-residue protein sequence, read N- to C-terminus: MFTLSDFDFDLPPELIAQTALPERSASRLLEVNGQTTPASFADRRFAELPECIQPGDLLVFNDTKVLKARFLGQKASGGKIEVLVERLTGERTALAQIRASKSPGPGTVLRLADAFDVTVGERVEPFYTLHFPDDCLTLIEQFGRLPLPPYIEHDPDAFDETRYQTVYAQNPGAVAAPTAGLHFDDSIFARLDAKGVERATLTLHVGAGTFQPVRVENIAEHKMHSEWYQLPQSLVDRIAATRARGNRVIAVGTTSMRALEAAARDADAAGKPLAATSAETDIFITPGYKFRVVDRLVTNFHLPKSTLLMLVSAFAGIETIRAAYRHAIDGRYRFFSYGDAMLLTRSEDALNA.

It belongs to the QueA family. As to quaternary structure, monomer.

Its subcellular location is the cytoplasm. It carries out the reaction 7-aminomethyl-7-carbaguanosine(34) in tRNA + S-adenosyl-L-methionine = epoxyqueuosine(34) in tRNA + adenine + L-methionine + 2 H(+). The protein operates within tRNA modification; tRNA-queuosine biosynthesis. Transfers and isomerizes the ribose moiety from AdoMet to the 7-aminomethyl group of 7-deazaguanine (preQ1-tRNA) to give epoxyqueuosine (oQ-tRNA). The sequence is that of S-adenosylmethionine:tRNA ribosyltransferase-isomerase from Paraburkholderia phymatum (strain DSM 17167 / CIP 108236 / LMG 21445 / STM815) (Burkholderia phymatum).